We begin with the raw amino-acid sequence, 305 residues long: MRLSFFTALSAVASLGYALPGKLQSRDVSTSELDQFEFWVQYAAASYYEADYTAQVGDKLSCSKGNCPEVEATGATVSYDFSDSTITDTAGYIAVDHTNSAVVLAFRGSYSVRNWVADATFVHTNPGLCDGCLAELGFWSSWKLVRDDIIKELKEVVAQNPNYELVVVGHSLGAAVATLAATDLRGKGYPSAKLYAYASPRVGNAALAKYITAQGNNFRFTHTNDPVPKLPLLSMGYVHVSPEYWITSPNNATVSTSDIKVIDGDVSFDGNTGTGLPLLTDFEAHIWYFVQVDAGKGPGLPFKRV.

The first 26 residues, 1–26, serve as a signal peptide directing secretion; sequence MRLSFFTALSAVASLGYALPGKLQSR. 2 disulfide bridges follow: cysteine 62–cysteine 67 and cysteine 129–cysteine 132. Residue serine 171 is the Nucleophile of the active site. The active-site Charge relay system is the aspartate 225. A glycan (N-linked (GlcNAc...) asparagine) is linked at asparagine 251. Residue histidine 285 is the Charge relay system of the active site. Residues 303-305 constitute a propeptide, removed in mature form; the sequence is KRV.

The protein belongs to the AB hydrolase superfamily. Lipase family. Class 3 subfamily. In terms of processing, multiple forms of this lipase are due to the presence of different carbohydrates, which may contribute to the stability of this lipase but not to the enzyme activity.

Its subcellular location is the secreted. The catalysed reaction is a monoacylglycerol + H2O = glycerol + a fatty acid + H(+). It catalyses the reaction a diacylglycerol + H2O = a monoacylglycerol + a fatty acid + H(+). Both Fe(3+) and Hg(2+) inhibit the activity significantly. Its function is as follows. Secreted lipase strictly specific to mono- and diacylglycerol, but not triacylglycerol. Hydrolyzes long-chain monoacylglycerols most efficiently with the highest activities observed on 1- and 3- monopalmitoyl-sn-glycerol or 1-monostearoyl-rac-glycerol. Prefers to attack alpha positions to beta positions of monoacylglycerol, but shows no stereospecificity on mono- and diacylglycerol. This is Secreted mono- and diacylglycerol lipase A from Penicillium camembertii.